A 202-amino-acid chain; its full sequence is Ras-related protein ORAB-1 (202 aa).

Residues 15-23, 33-40, 63-67, 121-124, and 151-153 contribute to the GTP site; these read GDSGVGKSC, YTESYIST, DTAGQ, NKCD, and SAK. Positions 37–45 match the Effector region motif; the sequence is YISTIGVDF. The interval 173–202 is disordered; that stretch reads MGPGATSGGSEKSNVNIQSTPVKSSGGGCC. Positions 180 to 195 are enriched in polar residues; it reads GGSEKSNVNIQSTPVK. Residues Cys-201 and Cys-202 are each lipidated (S-geranylgeranyl cysteine).

Belongs to the small GTPase superfamily. Rab family.

The protein localises to the cell membrane. Functionally, protein transport. Probably involved in vesicular traffic. This is Ras-related protein ORAB-1 from Diplobatis ommata (Ocellated electric ray).